The primary structure comprises 43 residues: CLAVATA3/ESR (CLE)-related protein 16D10 (43 aa).

Residues methionine 1–alanine 30 form the signal peptide. A CLE motif is present at residues glycine 31 to asparagine 43.

The protein belongs to the CLV3/ESR signal peptide family. In terms of tissue distribution, highly expressed exclusively within the subventral esophageal gland cell during syncytium formation in host plants.

Its subcellular location is the secreted. It localises to the host cytoplasm. The protein localises to the host extracellular space. Plays a role in the differentiation or division of feeding cells (syncytia) induced in plant roots during infection. Promotes host root growth. This chain is CLAVATA3/ESR (CLE)-related protein 16D10 (16D10), found in Meloidogyne arenaria (Peanut root-knot nematode).